We begin with the raw amino-acid sequence, 86 residues long: RNA-binding protein Hfq (86 aa).

Positions 9–68 constitute a Sm domain; the sequence is DPYLNTLRKEKVPVSIYLVNGIKLQGQIESFDQFVVLLKNTVSQMVYKHAISTVVPARPV. The tract at residues 66–86 is disordered; the sequence is RPVRLPSPSDAEHGDSEPGNA. Basic and acidic residues predominate over residues 75–86; that stretch reads DAEHGDSEPGNA.

The protein belongs to the Hfq family. Homohexamer.

In terms of biological role, RNA chaperone that binds small regulatory RNA (sRNAs) and mRNAs to facilitate mRNA translational regulation in response to envelope stress, environmental stress and changes in metabolite concentrations. Also binds with high specificity to tRNAs. The chain is RNA-binding protein Hfq from Pseudomonas entomophila (strain L48).